A 78-amino-acid chain; its full sequence is Conotoxin ArMKLT2-0313 (78 aa).

A signal peptide spans 1–22; it reads MKLTCVLIIAVLCLTVCQLITA. The propeptide occupies 23 to 47; that stretch reads DYLRDKQKYRSVRLRDGMLNFKGSR. Pyrrolidone carboxylic acid is present on Gln-48. 3 cysteine pairs are disulfide-bonded: Cys-49–Cys-62, Cys-56–Cys-67, and Cys-61–Cys-75.

Belongs to the conotoxin O1 superfamily. As to expression, expressed by the venom duct.

The protein resides in the secreted. The sequence is that of Conotoxin ArMKLT2-0313 from Conus arenatus (Sand-dusted cone).